A 482-amino-acid chain; its full sequence is MIDADVIVGLEVHCQLDTKSKLFCGCSTDYRDDGPNTHVCPICLGLPGTMPALNKRAIEYAMKVAKALNCTIVPESEFSRKNYFYPDLDKAYQITQYDKPLAQGGYVEIEGDDGKERKIQLTRIHVEEDPGRLVHMGNAERGRYSLVDYNRAGIPLIEIVSEPDMRSPKEARKFLNKLRATLEYLGVFDSEKEGSLRVDANISLRGNERVEVKNITSYKGVEKALTFEVTRQKNLIRRGLPVERETRHYLEARGITQSARSKETENDYRYFPEPDLRPLRVQSWVKDIALPELPDARRERFVTQYSCSLNHARTLTGELKMANFFEGVVSGDRAGLCSLAATWIADTLAGELNYRNMGIDCVDPHRFGSLLAILRAGTITDKSGVEVLRVMLDEQLKGETVETPEAIVARLNLAKTAGDDGALAAAVKEVISENPKAIEDYKAGKNGAINFLVGQVMKKTRGRADPGELNRLVVAALKDGGQ.

It belongs to the GatB/GatE family. GatB subfamily. Heterotrimer of A, B and C subunits.

The enzyme catalyses L-glutamyl-tRNA(Gln) + L-glutamine + ATP + H2O = L-glutaminyl-tRNA(Gln) + L-glutamate + ADP + phosphate + H(+). The catalysed reaction is L-aspartyl-tRNA(Asn) + L-glutamine + ATP + H2O = L-asparaginyl-tRNA(Asn) + L-glutamate + ADP + phosphate + 2 H(+). Its function is as follows. Allows the formation of correctly charged Asn-tRNA(Asn) or Gln-tRNA(Gln) through the transamidation of misacylated Asp-tRNA(Asn) or Glu-tRNA(Gln) in organisms which lack either or both of asparaginyl-tRNA or glutaminyl-tRNA synthetases. The reaction takes place in the presence of glutamine and ATP through an activated phospho-Asp-tRNA(Asn) or phospho-Glu-tRNA(Gln). This chain is Aspartyl/glutamyl-tRNA(Asn/Gln) amidotransferase subunit B, found in Methanoregula boonei (strain DSM 21154 / JCM 14090 / 6A8).